We begin with the raw amino-acid sequence, 602 residues long: MTDILVSKIRNFCIIAHIDHGKSTLADRLLQDTGTVQQRDMQEQFLDSMDLERERGITIKLQAARMKYKADDSQEYVLNLIDTPGHVDFSYEVSRSLQACEGALLVVDASQGVEAQTLANVYLALENNLEIIPVLNKVDLPGADAEKIKQEIEEIIGLDTSNAINCSAKTGVGIKDILEAIVRRVPAPQDEIKLPTKALIFDSYYDPYRGVIVYFRVISGSLNKREKILLMASKKNYELDEIGIMAPDQQQVDELHAGEVGYLAASIKSVADARVGDTITLLNSPANDPLPGYKTANPMVFCGLFPTDADQFPDLRVSLEKLQLSDAALKYEPETSSAMGFGFRCGFLGLLHMEIVQERLEREYDLDLIVTAPSVIYKVNLNQQEHIFIDNPSTIPDPQLRESIEEPYVKMEIYAPNEFNGTLMGLCQERRGVFIDMKYITTDRVTLIYEIPLAEVVTDFFDQMKSRTQGYASMEYHLIGYRKNDLVRLDVLINSERADPLTSIVHKDKAYGIGRSLVEKLKELIPKQQFKIPIQASIGSRIIASESISALRKDVLSKCYGGDISRKKKLLKKQAKGKKRMKAMGKVEVPQEAFMAVLKLNQ.

In terms of domain architecture, tr-type G spans 7-189 (SKIRNFCIIA…AIVRRVPAPQ (183 aa)). Residues 19–24 (DHGKST) and 136–139 (NKVD) each bind GTP.

It belongs to the TRAFAC class translation factor GTPase superfamily. Classic translation factor GTPase family. LepA subfamily.

Its subcellular location is the cell inner membrane. It catalyses the reaction GTP + H2O = GDP + phosphate + H(+). Functionally, required for accurate and efficient protein synthesis under certain stress conditions. May act as a fidelity factor of the translation reaction, by catalyzing a one-codon backward translocation of tRNAs on improperly translocated ribosomes. Back-translocation proceeds from a post-translocation (POST) complex to a pre-translocation (PRE) complex, thus giving elongation factor G a second chance to translocate the tRNAs correctly. Binds to ribosomes in a GTP-dependent manner. The protein is Elongation factor 4 of Prochlorococcus marinus (strain MIT 9312).